The sequence spans 137 residues: Ribonuclease kappa (137 aa).

A run of 2 helical transmembrane segments spans residues 52–72 and 104–124; these read ACGI…GIFF and VSYN…FSFC.

Belongs to the RNase K family. In terms of assembly, interacts with the proton translocation complex V0 of the V-ATPase. Interacts with ATP6AP1. In terms of tissue distribution, widely expressed.

The protein resides in the endomembrane system. Its subcellular location is the cytoplasmic vesicle. The protein localises to the clathrin-coated vesicle membrane. Endoribonuclease which preferentially cleaves ApU and ApG phosphodiester bonds. Hydrolyzes UpU bonds at a lower rate. Regulates the activity of vacuolar (H+)-ATPase (V-ATPase) which is responsible for acidifying and maintaining the pH of intracellular compartments. Required at an early stage of receptor-mediated endocytosis. Functionally, (Microbial infection) Required at an early stage of both clathrin-mediated and clathrin-independent endocytic uptake of a diverse set of viruses, including dengue, West Nile, Sindbis, Rift Valley Fever, influenza, and human rhinoviruses. The chain is Ribonuclease kappa (RNASEK) from Homo sapiens (Human).